The sequence spans 588 residues: Glutamyl-tRNA(Gln) amidotransferase subunit B, mitochondrial (588 aa).

The transit peptide at M1–P109 directs the protein to the mitochondrion. Residues S22–P35 are compositionally biased toward low complexity. A disordered region spans residues S22 to L50.

It belongs to the GatB/GatE family. GatB subfamily. Subunit of the heterotrimeric GatCAB amidotransferase (AdT) complex, composed of A, B and C subunits.

The protein resides in the mitochondrion. It catalyses the reaction L-glutamyl-tRNA(Gln) + L-glutamine + ATP + H2O = L-glutaminyl-tRNA(Gln) + L-glutamate + ADP + phosphate + H(+). Allows the formation of correctly charged Gln-tRNA(Gln) through the transamidation of misacylated Glu-tRNA(Gln) in the mitochondria. The reaction takes place in the presence of glutamine and ATP through an activated gamma-phospho-Glu-tRNA(Gln). This chain is Glutamyl-tRNA(Gln) amidotransferase subunit B, mitochondrial, found in Penicillium rubens (strain ATCC 28089 / DSM 1075 / NRRL 1951 / Wisconsin 54-1255) (Penicillium chrysogenum).